The sequence spans 638 residues: Octopamine receptor 1 (638 aa).

The Extracellular segment spans residues methionine 1 to aspartate 28. The helical transmembrane segment at valine 29–valine 53 threads the bilayer. Residues alanine 54–asparagine 64 are Cytoplasmic-facing. The chain crosses the membrane as a helical span at residues valine 65–valine 87. Residues asparagine 88–glutamine 102 are Extracellular-facing. The cysteines at positions 101 and 230 are disulfide-linked. A helical transmembrane segment spans residues valine 103 to leucine 124. Residues aspartate 125–threonine 147 are Cytoplasmic-facing. The chain crosses the membrane as a helical span at residues leucine 148 to tryptophan 167. Over asparagine 168–arginine 239 the chain is Extracellular. Asparagine 178, asparagine 207, and asparagine 215 each carry an N-linked (GlcNAc...) asparagine glycan. The chain crosses the membrane as a helical span at residues isoleucine 240–leucine 259. At glutamine 260 to threonine 520 the chain is on the cytoplasmic side. The helical transmembrane segment at leucine 521–cysteine 545 threads the bilayer. Topologically, residues glutamate 546–proline 551 are extracellular. A helical membrane pass occupies residues isoleucine 552–phenylalanine 575. Residues serine 576–threonine 638 are Cytoplasmic-facing. The tract at residues aspartate 618–threonine 638 is disordered.

It belongs to the G-protein coupled receptor 1 family. In terms of tissue distribution, expressed in the central nervous system.

Its subcellular location is the cell membrane. G-protein coupled receptor for octopamine (OA), which is a neurotransmitter, neurohormone, and neuromodulator in invertebrates. Activation of this receptor by octopamine induces an increase in both inositol phosphates and cyclic AMP. The coupling to adenylyl cyclase seems to be less efficient than the coupling to phospholipase C. The rank order of potency for agonists is p-synephrine &gt;= clonidine &gt; p-octopamine = xylometazoline = phenylephrine = oxymetazoline &gt; B-HT920 &gt; serotonin = p-tyramine &gt; epinephrine &gt; norepinephrine &gt; methoxamine = dopamine = histamine. For antagonists, the rank order is yohimbine &gt; chlopromazine / spiperone &gt; phentolamine &gt; mianserine &gt; rauwolscine &gt; prazosin &gt; alprenolol / propanolol &gt; pindolol. This chain is Octopamine receptor 1, found in Lymnaea stagnalis (Great pond snail).